Reading from the N-terminus, the 205-residue chain is Holliday junction branch migration complex subunit RuvA (205 aa).

A domain I region spans residues 1–64 (MIGRLRGTLA…EDAHLLYGFA (64 aa)). The segment at 65–143 (EKRERELFRE…AWETSPAMFT (79 aa)) is domain II. The flexible linker stretch occupies residues 144-154 (LVSDGPLPVAS). The tract at residues 154-205 (SESSAEADAVSALVSLGYKPQEASKAIAAIKDKAGLSSEELIRRSLKGMISK) is domain III.

Belongs to the RuvA family. In terms of assembly, homotetramer. Forms an RuvA(8)-RuvB(12)-Holliday junction (HJ) complex. HJ DNA is sandwiched between 2 RuvA tetramers; dsDNA enters through RuvA and exits via RuvB. An RuvB hexamer assembles on each DNA strand where it exits the tetramer. Each RuvB hexamer is contacted by two RuvA subunits (via domain III) on 2 adjacent RuvB subunits; this complex drives branch migration. In the full resolvosome a probable DNA-RuvA(4)-RuvB(12)-RuvC(2) complex forms which resolves the HJ.

It is found in the cytoplasm. Its function is as follows. The RuvA-RuvB-RuvC complex processes Holliday junction (HJ) DNA during genetic recombination and DNA repair, while the RuvA-RuvB complex plays an important role in the rescue of blocked DNA replication forks via replication fork reversal (RFR). RuvA specifically binds to HJ cruciform DNA, conferring on it an open structure. The RuvB hexamer acts as an ATP-dependent pump, pulling dsDNA into and through the RuvAB complex. HJ branch migration allows RuvC to scan DNA until it finds its consensus sequence, where it cleaves and resolves the cruciform DNA. In Pseudomonas putida (strain ATCC 47054 / DSM 6125 / CFBP 8728 / NCIMB 11950 / KT2440), this protein is Holliday junction branch migration complex subunit RuvA.